The chain runs to 291 residues: Zinc transporter ZupT (291 aa).

8 helical membrane passes run 8 to 28, 39 to 59, 74 to 94, 147 to 167, 174 to 194, 209 to 229, 233 to 253, and 271 to 291; these read IFIA…GSII, VLSL…FMEI, HWAE…SLLI, GIFT…ATFI, TLGI…GLAV, FIYS…GALI, FIGD…MVFI, and SLYG…LLGQ. The Fe(2+) site is built by N158 and E161. Positions 161 and 186 each coordinate Zn(2+). Positions 187, 190, and 219 each coordinate Fe(2+). Residue E190 participates in Zn(2+) binding.

It belongs to the ZIP transporter (TC 2.A.5) family. ZupT subfamily.

It localises to the cell inner membrane. It catalyses the reaction Zn(2+)(in) = Zn(2+)(out). Its function is as follows. Mediates zinc uptake. May also transport other divalent cations. The protein is Zinc transporter ZupT of Campylobacter jejuni subsp. jejuni serotype O:2 (strain ATCC 700819 / NCTC 11168).